The following is a 548-amino-acid chain: Chaperonin GroEL (548 aa).

Residues 30–33 (TLGP), lysine 51, 87–91 (DGTTT), glycine 415, and aspartate 495 each bind ATP.

The protein belongs to the chaperonin (HSP60) family. Forms a cylinder of 14 subunits composed of two heptameric rings stacked back-to-back. Interacts with the co-chaperonin GroES.

The protein localises to the cytoplasm. The enzyme catalyses ATP + H2O + a folded polypeptide = ADP + phosphate + an unfolded polypeptide.. Together with its co-chaperonin GroES, plays an essential role in assisting protein folding. The GroEL-GroES system forms a nano-cage that allows encapsulation of the non-native substrate proteins and provides a physical environment optimized to promote and accelerate protein folding. This is Chaperonin GroEL from Idiomarina loihiensis (strain ATCC BAA-735 / DSM 15497 / L2-TR).